The primary structure comprises 164 residues: Endoribonuclease YbeY (164 aa).

Zn(2+) is bound by residues H120, H124, and H130.

This sequence belongs to the endoribonuclease YbeY family. Zn(2+) serves as cofactor.

Its subcellular location is the cytoplasm. Functionally, single strand-specific metallo-endoribonuclease involved in late-stage 70S ribosome quality control and in maturation of the 3' terminus of the 16S rRNA. This chain is Endoribonuclease YbeY, found in Acidothermus cellulolyticus (strain ATCC 43068 / DSM 8971 / 11B).